The primary structure comprises 397 residues: MEKTIAINAGSSSLKFQLYDMPSERVITAGIVERIGLKDSIFTITVDGEKIKEIIDIPDHEIAVQMLLEKLINHKVIGSYDEITGIGHRVVHGGERFPESVYIDDQVIKDIEALSELAPLHNPANVTGIKAFRKILPDVVSVAVFDTAFHQTMPPASYLYSLPYSYYEDYGIRKYGFHGTSHKYVSERAAELLGRPVEELRLLTCHLGNGASIAAIEGGKSMDTSMGFTPLAGVSMGTRSGNIDPALIPFIMEKTGKTAEQVLDVLNKESGMLGVSGISSDLRDLEDEAAKGNDRAELALQVFVDRIHKYIGSYAARMNGVDAIIFTAGIGENSSYIREKVLRGLEFMGVYWDPALNQVRGEERFLNYPHSPVKVIIIPTNEELMIARDVETIKNNR.

A Mg(2+)-binding site is contributed by Asn8. ATP is bound at residue Lys15. Residue Arg89 participates in substrate binding. Asp146 acts as the Proton donor/acceptor in catalysis. ATP is bound by residues 206-210 (HLGNG), 281-283 (DLR), and 329-333 (GIGEN). Residue Glu382 coordinates Mg(2+).

It belongs to the acetokinase family. Homodimer. It depends on Mg(2+) as a cofactor. The cofactor is Mn(2+).

The protein localises to the cytoplasm. The enzyme catalyses acetate + ATP = acetyl phosphate + ADP. It participates in metabolic intermediate biosynthesis; acetyl-CoA biosynthesis; acetyl-CoA from acetate: step 1/2. Its function is as follows. Catalyzes the formation of acetyl phosphate from acetate and ATP. Can also catalyze the reverse reaction. The sequence is that of Acetate kinase 1 from Listeria monocytogenes serovar 1/2a (strain ATCC BAA-679 / EGD-e).